The primary structure comprises 233 residues: Modulator of macroautophagy TMEM150B (233 aa).

At 1–7 (MWGYLSL) the chain is on the cytoplasmic side. A helical membrane pass occupies residues 8–28 (MPVFLAVWAISGVWIVFAIAV). Residues 29–51 (TNRTVDLSKGFPYISICGSFPPQ) lie on the Extracellular side of the membrane. A glycan (N-linked (GlcNAc...) asparagine) is linked at Asn-30. The helical transmembrane segment at 52–72 (SCIFSQVLNMGAALAAWICIV) threads the bilayer. Residues 73–84 (RYHQLRDWGVRR) lie on the Cytoplasmic side of the membrane. The helical transmembrane segment at 85-105 (WPNQLILWTGLLCALGTSVVG) threads the bilayer. Topologically, residues 106–116 (NFQEKNQRPTH) are extracellular. A helical transmembrane segment spans residues 117 to 137 (LAGAFLAFILGNVYFWLQLLL). The Cytoplasmic segment spans residues 138 to 155 (WRLKRLPQPGAAWIGPLR). Residues 156-176 (LGLCSVCTILIVAMIVLHACS) traverse the membrane as a helical segment. Over 177 to 185 (LRSVSAACE) the chain is Extracellular. A helical transmembrane segment spans residues 186 to 206 (WVVAMLLFALFGLLAVDFSAL). The Cytoplasmic segment spans residues 207–233 (ESCTLCVQPWPSLSPPPASPISLPVQL).

The protein belongs to the DRAM/TMEM150 family. As to expression, highly expressed in the colon and lung with comparatively high levels also detectable in the lymph nodes, placenta, duodenum, peripheral blood mononuclear cells and spleen.

The protein resides in the cell membrane. Its subcellular location is the endosome membrane. The protein localises to the cytoplasmic vesicle. It is found in the autophagosome membrane. Modulator of macroautophagy that causes accumulation of autophagosomes under basal conditions and enhances autophagic flux. Represses cell death and promotes long-term clonogenic survival of cells grown in the absence of glucose in a macroautophagy-independent manner. May have some role in extracellular matrix engulfment or growth factor receptor recycling, both of which can modulate cell survival. The protein is Modulator of macroautophagy TMEM150B of Homo sapiens (Human).